A 119-amino-acid chain; its full sequence is Large ribosomal subunit protein uL22c (119 aa).

Belongs to the universal ribosomal protein uL22 family. Part of the 50S ribosomal subunit.

The protein localises to the plastid. The protein resides in the chloroplast. Its function is as follows. This protein binds specifically to 23S rRNA. Functionally, the globular domain of the protein is located near the polypeptide exit tunnel on the outside of the subunit, while an extended beta-hairpin is found that lines the wall of the exit tunnel in the center of the 70S ribosome. This is Large ribosomal subunit protein uL22c (rpl22) from Spirogyra maxima (Green alga).